A 301-amino-acid chain; its full sequence is Probable alpha-L-glutamate ligase (301 aa).

The ATP-grasp domain maps to 104 to 287 (LQLLSRKGIG…VADMIFEFIE (184 aa)). Residues Lys-141, 178 to 179 (EF), Asp-187, and 211 to 213 (RSN) each bind ATP. Mg(2+) is bound by residues Asp-248, Glu-260, and Asn-262. Asp-248, Glu-260, and Asn-262 together coordinate Mn(2+).

This sequence belongs to the RimK family. The cofactor is Mg(2+). Mn(2+) serves as cofactor.

The polypeptide is Probable alpha-L-glutamate ligase (Vibrio atlanticus (strain LGP32) (Vibrio splendidus (strain Mel32))).